A 221-amino-acid polypeptide reads, in one-letter code: Endonuclease V (221 aa).

2 residues coordinate Mg(2+): Asp-44 and Asp-112.

The protein belongs to the endonuclease V family. Mg(2+) is required as a cofactor.

It is found in the cytoplasm. The catalysed reaction is Endonucleolytic cleavage at apurinic or apyrimidinic sites to products with a 5'-phosphate.. Its function is as follows. DNA repair enzyme involved in the repair of deaminated bases. Selectively cleaves double-stranded DNA at the second phosphodiester bond 3' to a deoxyinosine leaving behind the intact lesion on the nicked DNA. The chain is Endonuclease V from Nostoc sp. (strain PCC 7120 / SAG 25.82 / UTEX 2576).